The sequence spans 429 residues: UDP-N-acetylglucosamine 1-carboxyvinyltransferase 2 (429 aa).

Residue 22 to 23 (KN) participates in phosphoenolpyruvate binding. Arg-93 is a UDP-N-acetyl-alpha-D-glucosamine binding site. The Proton donor role is filled by Cys-117. Cys-117 is subject to 2-(S-cysteinyl)pyruvic acid O-phosphothioketal. Residues 122-126 (RPIDQ), Asp-305, and Ile-327 contribute to the UDP-N-acetyl-alpha-D-glucosamine site.

Belongs to the EPSP synthase family. MurA subfamily.

It localises to the cytoplasm. The enzyme catalyses phosphoenolpyruvate + UDP-N-acetyl-alpha-D-glucosamine = UDP-N-acetyl-3-O-(1-carboxyvinyl)-alpha-D-glucosamine + phosphate. The protein operates within cell wall biogenesis; peptidoglycan biosynthesis. In terms of biological role, cell wall formation. Adds enolpyruvyl to UDP-N-acetylglucosamine. This chain is UDP-N-acetylglucosamine 1-carboxyvinyltransferase 2, found in Bacillus cereus (strain ATCC 14579 / DSM 31 / CCUG 7414 / JCM 2152 / NBRC 15305 / NCIMB 9373 / NCTC 2599 / NRRL B-3711).